A 185-amino-acid polypeptide reads, in one-letter code: Pap fimbrial major pilin protein (185 aa).

A signal peptide spans Met-1–Ala-22. Cys-44 and Cys-83 are joined by a disulfide.

It belongs to the fimbrial protein family.

The protein localises to the secreted. Its subcellular location is the fimbrium. In terms of biological role, polymerizes to form the thick (6.8 nm in diameter) rod of the pilus (also called fimbria). The rod is a right-handed helical cylinder with 3.28 PapA subunits per turn. Pili are polar filaments radiating from the surface of the bacterium to a length of 0.5-1.5 micrometers and numbering 100-300 per cell, and enable bacteria to colonize the epithelium of specific host organs. This chain is Pap fimbrial major pilin protein (papA), found in Escherichia coli.